The primary structure comprises 505 residues: N-succinylglutamate 5-semialdehyde dehydrogenase (505 aa).

Position 234-239 (234-239 (GSAHTG)) interacts with NAD(+). Residues glutamate 257 and cysteine 291 contribute to the active site.

This sequence belongs to the aldehyde dehydrogenase family. AstD subfamily.

It carries out the reaction N-succinyl-L-glutamate 5-semialdehyde + NAD(+) + H2O = N-succinyl-L-glutamate + NADH + 2 H(+). The protein operates within amino-acid degradation; L-arginine degradation via AST pathway; L-glutamate and succinate from L-arginine: step 4/5. In terms of biological role, catalyzes the NAD-dependent reduction of succinylglutamate semialdehyde into succinylglutamate. The chain is N-succinylglutamate 5-semialdehyde dehydrogenase from Yersinia pestis (strain Pestoides F).